The sequence spans 189 residues: MVKVIASSVRKGNVLDVDGKLYVVLTAQNFHPGKGTPVTQVDMRRISDGVKVSERYRTTEQVERAFVEDREHTFLYEDGEGFHFMNPETYDQLVMSSEDIGDLKAYLQEGMAVMLSIHEGIAIAIDLPRHVTLEITETEPVVKGQTASSSYKPAVLSNGVRTLVPPHIQAGTRVVIATEDGSYVERAKD.

This sequence belongs to the elongation factor P family.

It is found in the cytoplasm. It functions in the pathway protein biosynthesis; polypeptide chain elongation. Involved in peptide bond synthesis. Stimulates efficient translation and peptide-bond synthesis on native or reconstituted 70S ribosomes in vitro. Probably functions indirectly by altering the affinity of the ribosome for aminoacyl-tRNA, thus increasing their reactivity as acceptors for peptidyl transferase. The protein is Elongation factor P of Rhizobium meliloti (strain 1021) (Ensifer meliloti).